Consider the following 121-residue polypeptide: Large ribosomal subunit protein mL52 (121 aa).

Residues 1–22 (MAALGTWLSSVRRLHCSVVARA) constitute a mitochondrion transit peptide. Basic and acidic residues predominate over residues 98-109 (QEERKKEHDLKP). Residues 98-121 (QEERKKEHDLKPKGTLLRSPLPNQ) form a disordered region.

Belongs to the mitochondrion-specific ribosomal protein mL52 family. Component of the mitochondrial ribosome large subunit (39S) which comprises a 16S rRNA and about 50 distinct proteins.

The protein localises to the mitochondrion. The protein is Large ribosomal subunit protein mL52 (Mrpl52) of Mus musculus (Mouse).